The sequence spans 246 residues: MKGAVQQEPAYVVHRRPWRETALLVDLFTLNHGRMSVVARGANSTKSPLKAQLQPFQPLLVDWTGKSELKTLVQLEVRSAPAVSQPRALYSGFYINELVQRVLPVADPSPALFASYIETLQALADLSSQDDVEPLLRRFERAFAASLGYDFAWDETTDTGMSVQAGELYGYDPGQGIVSNLAPELPLRQLPGEALLALAAGDFISEAPRKTAKRVMRVLVDYLLQGRPLHSRSLFSHSNPSSGRES.

It belongs to the RecO family.

Its function is as follows. Involved in DNA repair and RecF pathway recombination. The protein is DNA repair protein RecO of Marinobacter nauticus (strain ATCC 700491 / DSM 11845 / VT8) (Marinobacter aquaeolei).